The sequence spans 186 residues: Imidazole glycerol phosphate synthase subunit HisH (186 aa).

A Glutamine amidotransferase type-1 domain is found at 1 to 186 (MIAIIDYGSG…KLLRNFGELA (186 aa)). Catalysis depends on cysteine 72, which acts as the Nucleophile. Active-site residues include histidine 167 and glutamate 169.

Heterodimer of HisH and HisF.

Its subcellular location is the cytoplasm. It catalyses the reaction 5-[(5-phospho-1-deoxy-D-ribulos-1-ylimino)methylamino]-1-(5-phospho-beta-D-ribosyl)imidazole-4-carboxamide + L-glutamine = D-erythro-1-(imidazol-4-yl)glycerol 3-phosphate + 5-amino-1-(5-phospho-beta-D-ribosyl)imidazole-4-carboxamide + L-glutamate + H(+). The catalysed reaction is L-glutamine + H2O = L-glutamate + NH4(+). Its pathway is amino-acid biosynthesis; L-histidine biosynthesis; L-histidine from 5-phospho-alpha-D-ribose 1-diphosphate: step 5/9. IGPS catalyzes the conversion of PRFAR and glutamine to IGP, AICAR and glutamate. The HisH subunit catalyzes the hydrolysis of glutamine to glutamate and ammonia as part of the synthesis of IGP and AICAR. The resulting ammonia molecule is channeled to the active site of HisF. This is Imidazole glycerol phosphate synthase subunit HisH from Picrophilus torridus (strain ATCC 700027 / DSM 9790 / JCM 10055 / NBRC 100828 / KAW 2/3).